The chain runs to 702 residues: Elongation factor G (702 aa).

A tr-type G domain is found at 9–292 (DRTRNIGIMA…AVVDYLPSPL (284 aa)). Residues 18 to 25 (AHIDAGKT), 91 to 95 (DTPGH), and 145 to 148 (NKMD) contribute to the GTP site.

This sequence belongs to the TRAFAC class translation factor GTPase superfamily. Classic translation factor GTPase family. EF-G/EF-2 subfamily.

The protein localises to the cytoplasm. Functionally, catalyzes the GTP-dependent ribosomal translocation step during translation elongation. During this step, the ribosome changes from the pre-translocational (PRE) to the post-translocational (POST) state as the newly formed A-site-bound peptidyl-tRNA and P-site-bound deacylated tRNA move to the P and E sites, respectively. Catalyzes the coordinated movement of the two tRNA molecules, the mRNA and conformational changes in the ribosome. The sequence is that of Elongation factor G from Oenococcus oeni (strain ATCC BAA-331 / PSU-1).